A 469-amino-acid chain; its full sequence is SHC-transforming protein 1 (469 aa).

The segment at 1–26 is disordered; that stretch reads MNKLSGGGGRRTRVEGGQLGGEEWTR. A Phosphoserine modification is found at serine 29. The residue at position 44 (lysine 44) is an N6-acetyllysine. The 184-residue stretch at 46 to 229 folds into the PID domain; that stretch reads MGPGVSYLVR…AGFDGSAWDE (184 aa). The tract at residues 230–373 is CH1; sequence EEEELPDHQY…SMAEQLQGES (144 aa). Phosphotyrosine is present on residues tyrosine 239, tyrosine 240, and tyrosine 313. The tract at residues 322 to 344 is disordered; that stretch reads ARQAGGGAGPPNPSVNGSAPRDL. Serine 339 carries the post-translational modification Phosphoserine. In terms of domain architecture, SH2 spans 374 to 465; that stretch reads WFHGKLSRRE…GSELCLQQPV (92 aa).

As to quaternary structure, interacts with CPNE3; this interaction may mediate the binding of CPNE3 with ERBB2. Interacts with the NPXY motif of tyrosine-phosphorylated IGF1R and INSR in vitro via the PID domain. Once activated, binds to GRB2. Interacts with tyrosine-phosphorylated CD3T and DDR2. Interacts with the N-terminal region of APS. Interacts with phosphorylated LRP1 and IRS4. Interacts with INPP5D/SHIP1 and INPPL1/SHIP2. Interacts with ALK, GAB2, GRB7 and KIT. Interacts with PTPN6/SHP (tyrosine phosphorylated). Identified in a complex containing FGFR4, NCAM1, CDH2, PLCG1, FRS2A, SRC, SHC1, GAP43 and CTTN. Interacts with EPHB1 and GRB2; activates the MAPK/ERK cascade to regulate cell migration. Interacts with PDGFRB (tyrosine-phosphorylated). Interacts with ERBB4. Interacts with TEK/TIE2 (tyrosine-phosphorylated). Interacts with PTK2/FAK1. Interacts with FLT4 (tyrosine-phosphorylated). Interacts with the Trk receptors NTRK1, NTRK2 and NTRK3; in a phosphotyrosine-dependent manner. Interacts with CEACAM1; this interaction is CEACAM1-phosphorylation-dependent and mediates interaction with EGFR or INSR resulting in decrease coupling of SHC1 to the MAPK3/ERK1-MAPK1/ERK2 pathway. Interacts (via PID domain) with PEAK1 (when phosphorylated). Found in a complex with PPP1CA, PPP1CC, SHC1 and PEAK1. In terms of processing, phosphorylated by activated epidermal growth factor receptor. Phosphorylated in response to KIT signaling. Tyrosine phosphorylated in response to FLT3 signaling and by ligand-activated ALK. Tyrosine phosphorylated by TEK/TIE2. Tyrosine phosphorylated by ligand-activated PDGFRB. May be tyrosine phosphorylated by activated PTK2/FAK1. Dephosphorylation by PTPN2 may regulate interaction with GRB2. Phosphorylated in response to FLT4 signaling. Tyrosine phosphorylated by activated PTK2B/PYK2.

Its subcellular location is the cytoplasm. The protein localises to the cell junction. It is found in the focal adhesion. Its function is as follows. Signaling adapter that couples activated growth factor receptors to signaling pathways. Participates in a signaling cascade initiated by activated KIT and KITLG/SCF. Participates in signaling downstream of the angiopoietin receptor TEK/TIE2, and plays a role in the regulation of endothelial cell migration and sprouting angiogenesis. This Rattus norvegicus (Rat) protein is SHC-transforming protein 1 (Shc1).